Reading from the N-terminus, the 358-residue chain is Src kinase-associated phosphoprotein 2 (358 aa).

Phosphoserine occurs at positions 5 and 6. The interval 62-88 (ESQDKGDAEDGEEYDDPFAGPPDTISL) is disordered. Phosphotyrosine is present on tyrosine 75. 2 positions are modified to phosphoserine: serine 87 and serine 90. Residues 116-219 (FVLKAGYLEK…WVQQLNFVLQ (104 aa)) form the PH domain. A phosphotyrosine mark is found at tyrosine 151 and tyrosine 197. Serine 223 is modified (phosphoserine). Residues 232–254 (ERGELYDDVDHPLPSSSPTRSLP) form a disordered region. Residues 243 to 253 (PLPSSSPTRSL) show a composition bias toward low complexity. At tyrosine 260 the chain carries Phosphotyrosine. Residues serine 282 and serine 285 each carry the phosphoserine modification. The 62-residue stretch at 296–357 (NYANFYQGLW…PKAYVMEMYD (62 aa)) folds into the SH3 domain.

It belongs to the SKAP family. In terms of assembly, interacts with FYB1, which is required for SKAP2 protein stability. Interacts with PTPNS1. Part of a complex consisting of SKAP2, FYB1 and PTPNS1. Part of a complex consisting of SKAP2, FYB1 and LILRB3. Interacts with LAT, GRB2, PTK2B and PRAM1. May interact with actin. May interact with FYN, HCK and LYN. Interacts with FASLG.

The protein resides in the cytoplasm. Its function is as follows. May be involved in B-cell and macrophage adhesion processes. In B-cells, may act by coupling the B-cell receptor (BCR) to integrin activation. May play a role in src signaling pathway. The protein is Src kinase-associated phosphoprotein 2 (SKAP2) of Bos taurus (Bovine).